A 344-amino-acid polypeptide reads, in one-letter code: D-arabinose dehydrogenase [NAD(P)+] heavy chain (344 aa).

The active-site Proton donor is tyrosine 71. Position 131 (histidine 131) interacts with substrate. Position 151 is a phosphothreonine (threonine 151). An NADP(+)-binding site is contributed by serine 241 to serine 295.

It belongs to the aldo/keto reductase family. In terms of assembly, heterodimer of a heavy chain and a light chain.

The protein resides in the cytoplasm. The enzyme catalyses D-arabinose + NADP(+) = D-arabinono-1,4-lactone + NADPH + H(+). It carries out the reaction D-arabinose + NAD(+) = D-arabinono-1,4-lactone + NADH + H(+). Catalyzes the oxidation of D-arabinose, L-xylose, L-fucose and L-galactose in the presence of NADP(+). The sequence is that of D-arabinose dehydrogenase [NAD(P)+] heavy chain (ARA1) from Saccharomyces cerevisiae (strain ATCC 204508 / S288c) (Baker's yeast).